The chain runs to 147 residues: Mucoricin (147 aa).

The Ricin B-type lectin domain occupies 4 to 143 (EEGRLFFIKS…VSANQRWELV (140 aa)).

This sequence belongs to the ribosome-inactivating protein family. Type 1 RIP subfamily.

The protein resides in the secreted. The enzyme catalyses Endohydrolysis of the N-glycosidic bond at one specific adenosine on the 28S rRNA.. Its function is as follows. N-glycosylase that inhibits protein synthesis in the host by depurinating ribosomal rRNA, and thus acts as a ribosomal inactivating protein (RIP). Promotes vascular permeability in the host and induces necrosis and apoptosis of host alveolar epithelial cells. This chain is Mucoricin, found in Rhizopus delemar (strain RA 99-880 / ATCC MYA-4621 / FGSC 9543 / NRRL 43880) (Mucormycosis agent).